A 497-amino-acid chain; its full sequence is Cobyric acid synthase (497 aa).

Positions 251–443 (DLKIGVVWYP…LHGLFDNDFF (193 aa)) constitute a GATase cobBQ-type domain. Cys-333 functions as the Nucleophile in the catalytic mechanism. The active site involves His-435.

This sequence belongs to the CobB/CobQ family. CobQ subfamily.

Its pathway is cofactor biosynthesis; adenosylcobalamin biosynthesis. In terms of biological role, catalyzes amidations at positions B, D, E, and G on adenosylcobyrinic A,C-diamide. NH(2) groups are provided by glutamine, and one molecule of ATP is hydrogenolyzed for each amidation. The sequence is that of Cobyric acid synthase from Carboxydothermus hydrogenoformans (strain ATCC BAA-161 / DSM 6008 / Z-2901).